Here is a 309-residue protein sequence, read N- to C-terminus: Acetylglutamate kinase (309 aa).

Substrate is bound by residues 69 to 70 (GG), Arg91, and Asn194.

The protein belongs to the acetylglutamate kinase family. ArgB subfamily.

The protein localises to the cytoplasm. It carries out the reaction N-acetyl-L-glutamate + ATP = N-acetyl-L-glutamyl 5-phosphate + ADP. It participates in amino-acid biosynthesis; L-arginine biosynthesis; N(2)-acetyl-L-ornithine from L-glutamate: step 2/4. Its function is as follows. Catalyzes the ATP-dependent phosphorylation of N-acetyl-L-glutamate. The protein is Acetylglutamate kinase of Vesicomyosocius okutanii subsp. Calyptogena okutanii (strain HA).